The primary structure comprises 235 residues: MSRYLTQLDDELCWFPDPEHALEEPNGLLAIGGDLSPARLLAAYHKGIFPWNEPHQPLLWWSPDPRGVIRPEQLHIGRTLRKFIRGTSFDISIDRAFNEVIAACAAPRRSASGTWISTPMIDAYRQLHRLGHAHSIEIWQEGQLQAGLYGLSLGRVFCGESMFSRIDNGAKLAMVALCQHFARHDGALIDCQMQNDFLATLGIEEWPRRQFLTTLAQLSRQPLAANCWQTGSILL.

It belongs to the L/F-transferase family.

It is found in the cytoplasm. It carries out the reaction N-terminal L-lysyl-[protein] + L-leucyl-tRNA(Leu) = N-terminal L-leucyl-L-lysyl-[protein] + tRNA(Leu) + H(+). It catalyses the reaction N-terminal L-arginyl-[protein] + L-leucyl-tRNA(Leu) = N-terminal L-leucyl-L-arginyl-[protein] + tRNA(Leu) + H(+). The enzyme catalyses L-phenylalanyl-tRNA(Phe) + an N-terminal L-alpha-aminoacyl-[protein] = an N-terminal L-phenylalanyl-L-alpha-aminoacyl-[protein] + tRNA(Phe). Functions in the N-end rule pathway of protein degradation where it conjugates Leu, Phe and, less efficiently, Met from aminoacyl-tRNAs to the N-termini of proteins containing an N-terminal arginine or lysine. The sequence is that of Leucyl/phenylalanyl-tRNA--protein transferase from Aeromonas hydrophila subsp. hydrophila (strain ATCC 7966 / DSM 30187 / BCRC 13018 / CCUG 14551 / JCM 1027 / KCTC 2358 / NCIMB 9240 / NCTC 8049).